The following is a 72-amino-acid chain: Lantibiotic Flvbeta.g (72 aa).

A propeptide spans 1–34 (cleaved by FlvT); that stretch reads MNNNNFDMEKFKKLAAIVSEGEIDEMLDETTVGA. The segment at residues 36–40 is a cross-link (lanthionine (Ser-Cys); by FlvM2); the sequence is STLPC. Thr-37, Thr-46, and Thr-48 each carry 2,3-didehydrobutyrine; by FlvM2. 3 consecutive cross-links (beta-methyllanthionine (Thr-Cys); by FlvM2) follow at residues 55-61, 63-66, and 67-70; these read TTGFDWC, TGAC, and THSC.

Post-translationally, contains LL-lanthionine and DL-beta-methyllanthionine, when coepressed in E.coli with the flavecin synthetase FlvM2.

It localises to the secreted. Functionally, lanthionine-containing peptide antibiotic (lantibiotic) that is probably weakly active on Gram-positive bacteria, since its analog [Del1]Flvbeta.g shows weak antibacterial activity against M.luteus. This activity is synergistically enhanced by [Del2]Flvalpha.a, an analog of Flvalpha.a, which is encoded by the same operon than Flvbeta.g. The bactericidal activity of lantibiotics is based on depolarization of energized bacterial cytoplasmic membranes, initiated by the formation of aqueous transmembrane pores. This chain is Lantibiotic Flvbeta.g, found in Ruminococcus flavefaciens.